The chain runs to 307 residues: UAP56-interacting factor (307 aa).

Residues 1 to 25 show a composition bias toward low complexity; that stretch reads MSGFGAAALLSGSSAAAGTRSGSSD. Disordered regions lie at residues 1–28 and 41–85; these read MSGFGAAALLSGSSAAAGTRSGSSDSLE and NKKE…KNHL. Positions 26-44 match the UAP56-binding motif motif; that stretch reads SLEKIDMSLDDIIKLNKKE. Residues 57–78 are compositionally biased toward polar residues; sequence LQQNRTQQFRTPGSKWGIQQQK.

Belongs to the UIF family. As to expression, widely expressed.

Its subcellular location is the nucleus. It is found in the nucleoplasm. The protein resides in the nucleus speckle. Functionally, required for mRNA export from the nucleus to the cytoplasm. Acts as an adapter that uses the DDX39B/UAP56-NFX1 pathway to ensure efficient mRNA export and delivering to the nuclear pore. This Gallus gallus (Chicken) protein is UAP56-interacting factor (FYTTD1).